The primary structure comprises 113 residues: Ribosome-binding factor A (113 aa).

The protein belongs to the RbfA family. Monomer. Binds 30S ribosomal subunits, but not 50S ribosomal subunits or 70S ribosomes.

It is found in the cytoplasm. Functionally, one of several proteins that assist in the late maturation steps of the functional core of the 30S ribosomal subunit. Associates with free 30S ribosomal subunits (but not with 30S subunits that are part of 70S ribosomes or polysomes). Required for efficient processing of 16S rRNA. May interact with the 5'-terminal helix region of 16S rRNA. In Mycoplasmopsis agalactiae (strain NCTC 10123 / CIP 59.7 / PG2) (Mycoplasma agalactiae), this protein is Ribosome-binding factor A.